The following is a 742-amino-acid chain: Enhancer of polycomb-like protein 1 (742 aa).

The span at 1 to 27 shows a compositional bias: polar residues; sequence MPTPSAQLDQGIISSNGGTSGVSASST. 3 disordered regions span residues 1-28, 416-446, and 718-742; these read MPTP…SSTR, RQQS…QCQQ, and KKLV…HQQA. Residues 724 to 734 show a composition bias toward low complexity; it reads QRQQQQQQQEQ.

It belongs to the enhancer of polycomb family. As to quaternary structure, component of the NuA4 histone acetyltransferase complex.

The protein resides in the nucleus. In terms of biological role, component of the NuA4 histone acetyltransferase complex which is involved in transcriptional activation of selected genes principally by acetylation of nucleosomal histone H4 and H2A. The NuA4 complex is also involved in DNA repair. Involved in gene silencing by neighboring heterochromatin, blockage of the silencing spreading along the chromosome, and required for cell cycle progression through G2/M. The chain is Enhancer of polycomb-like protein 1 (EPL1) from Eremothecium gossypii (strain ATCC 10895 / CBS 109.51 / FGSC 9923 / NRRL Y-1056) (Yeast).